The sequence spans 220 residues: UPF0502 protein VVA1225 (220 aa).

This sequence belongs to the UPF0502 family.

In Vibrio vulnificus (strain YJ016), this protein is UPF0502 protein VVA1225.